The chain runs to 65 residues: MARTNKLLTPGVEQFLDQYKYEIAQEFGVTLGSDTAARSNGSVGGEITKRLVQQAQAHLSGSTQK.

This sequence belongs to the alpha/beta-type SASP family.

SASP are bound to spore DNA. They are double-stranded DNA-binding proteins that cause DNA to change to an a-like conformation. They protect the DNA backbone from chemical and enzymatic cleavage and are thus involved in dormant spore's high resistance to UV light. In Priestia megaterium (Bacillus megaterium), this protein is Small, acid-soluble spore protein C3 (SASP-C3).